Consider the following 662-residue polypeptide: MLNPGALGVNLVVEELETETKFLIKQVECIDEHHANKALEELMPLLKLQHPNLSLYHEMFIMWNNEISSLFLCLVMDYYSQGTFQNIMENKRKLKAVVDTEWMHTMLSQVLDAIEYLHKLNIVHRNLKPSNIVLVNSGYCKLQDMSSQALMTHEAKWNVRAEEDPCQKSWMAPEALKFSFSTKSDIWSLGCIILDMATCSFLNDTEAMQLRKAIRHHPGSLKPILKTMEEKQIPGTDVYYLLLPFMLHINPSDRLAIKDVMQVTFMSNSFKSSSVALNMQRQKVPIFITDVLLEGNMANILDVMQNFSSRPEVQLRAINKLLTMPEDQLGLPWPTELLEEVISIIKQHGRILDILLSTCSLLLRVLGQALAKDPEAEIPRSSLIISFLMDTLRSHPNSERLVNVVYNVLAIISSQGQISEELEEEGLFQLAQENLEHFQEDRDICLSILSLLWSLLVDVVTVDKEPLEQLSGMVTWVLATHPEDVEIAEAGCAVLWLLSLLGCIKESQFEQVVVLLLRSIQLCPGRVLLVNNAFRGLASLAKVSELVAFRIVVLEEGSSGLHLIQDIYKLYKDDPEVVENLCMLLAHLTSYKEILPEMESGGIKDLVQVIRGRFTSSLELISYADEILQVLEANAQPGLQEDQLEPPAGQEAPLQGEPLFRP.

In terms of domain architecture, Protein kinase spans 1-202; sequence MLNPGALGVN…ILDMATCSFL (202 aa). ATP contacts are provided by residues 2-10 and lysine 25; that span reads LNPGALGVN. The segment at 639–662 is disordered; it reads LQEDQLEPPAGQEAPLQGEPLFRP.

Belongs to the protein kinase superfamily. Ser/Thr protein kinase family. STKL subfamily.

The sequence is that of Serine/threonine kinase-like domain-containing protein STKLD1 (Stkld1) from Mus musculus (Mouse).